We begin with the raw amino-acid sequence, 480 residues long: tRNA-2-methylthio-N(6)-dimethylallyladenosine synthase (480 aa).

An MTTase N-terminal domain is found at 2–118 (NRVHIKTYGC…VPGYLDNLRA (117 aa)). [4Fe-4S] cluster is bound by residues Cys-11, Cys-47, and Cys-81. The tract at residues 145–169 (DHLLPQDSDSDSQPSTLNSQLRGAA) is disordered. Residues 149-159 (PQDSDSDSQPS) show a composition bias toward low complexity. Residues 171–405 (PPPQITAFVS…LELLRQNSER (235 aa)) enclose the Radical SAM core domain. Positions 185, 189, and 192 each coordinate [4Fe-4S] cluster. In terms of domain architecture, TRAM spans 408–470 (ALLLDTVEEV…VSTLYGELML (63 aa)).

It belongs to the methylthiotransferase family. MiaB subfamily. In terms of assembly, monomer. Requires [4Fe-4S] cluster as cofactor.

The protein resides in the cytoplasm. It carries out the reaction N(6)-dimethylallyladenosine(37) in tRNA + (sulfur carrier)-SH + AH2 + 2 S-adenosyl-L-methionine = 2-methylsulfanyl-N(6)-dimethylallyladenosine(37) in tRNA + (sulfur carrier)-H + 5'-deoxyadenosine + L-methionine + A + S-adenosyl-L-homocysteine + 2 H(+). In terms of biological role, catalyzes the methylthiolation of N6-(dimethylallyl)adenosine (i(6)A), leading to the formation of 2-methylthio-N6-(dimethylallyl)adenosine (ms(2)i(6)A) at position 37 in tRNAs that read codons beginning with uridine. This is tRNA-2-methylthio-N(6)-dimethylallyladenosine synthase from Opitutus terrae (strain DSM 11246 / JCM 15787 / PB90-1).